A 210-amino-acid chain; its full sequence is dTTP/UTP pyrophosphatase (210 aa).

D89 serves as the catalytic Proton acceptor.

Belongs to the Maf family. YhdE subfamily. The cofactor is a divalent metal cation.

Its subcellular location is the cytoplasm. The catalysed reaction is dTTP + H2O = dTMP + diphosphate + H(+). It carries out the reaction UTP + H2O = UMP + diphosphate + H(+). In terms of biological role, nucleoside triphosphate pyrophosphatase that hydrolyzes dTTP and UTP. May have a dual role in cell division arrest and in preventing the incorporation of modified nucleotides into cellular nucleic acids. The chain is dTTP/UTP pyrophosphatase from Burkholderia thailandensis (strain ATCC 700388 / DSM 13276 / CCUG 48851 / CIP 106301 / E264).